The sequence spans 502 residues: UPF0371 protein CLB_0371 (502 aa).

The protein belongs to the UPF0371 family.

This chain is UPF0371 protein CLB_0371, found in Clostridium botulinum (strain ATCC 19397 / Type A).